We begin with the raw amino-acid sequence, 681 residues long: Protein asunder (681 aa).

The segment at 574–619 is disordered; sequence PGASHLRSYTESPLSPERLEPTSSASNSSSSILKASKRRMSSSGQR. The Nuclear localization signal (NLS) signature appears at 606–612; it reads LKASKRR.

This sequence belongs to the Integrator subunit 13 family. In terms of assembly, belongs to the multiprotein complex Integrator, at least composed of IntS1, IntS2, IntS3, IntS4, omd/IntS5, IntS6, defl/IntS7, IntS8, IntS9, IntS10, IntS11, IntS12, asun/IntS13, IntS14 and IntS15. The core complex associates with protein phosphatase 2A subunits mts/PP2A and Pp2A-29B, to form the Integrator-PP2A (INTAC) complex. In terms of processing, phosphorylated.

It localises to the nucleus. It is found in the cytoplasm. The protein localises to the perinuclear region. Component of the integrator complex, a multiprotein complex that terminates RNA polymerase II (Pol II) transcription in the promoter-proximal region of genes. The integrator complex provides a quality checkpoint during transcription elongation by driving premature transcription termination of transcripts that are unfavorably configured for transcriptional elongation: the complex terminates transcription by (1) catalyzing dephosphorylation of the C-terminal domain (CTD) of Pol II subunit Polr2A/Rbp1 and Spt5, and (2) degrading the exiting nascent RNA transcript via endonuclease activity. The integrator complex is also involved in the 3'-end processing of the U7 snRNA, and also the spliceosomal snRNAs U1, U2, U4 and U5. The protein is Protein asunder (asun) of Drosophila virilis (Fruit fly).